The following is an 823-amino-acid chain: MTQLQISLLLTATISLLHLVVATPYEAYPIGKQYPPVARVNESFTFQISNDTYKSSVDKTAQITYNCFDLPSWLSFDSSSRTFSGEPSSDLLSDANTTLYFNVILEGTDSADSTSLNNTYQFVVTNRPSISLSSDFNLLALLKNYGYTNGKNALKLDPNEVFNVTFDRSMFTNEESIVSYYGRSQLYNAPLPNWLFFDSGELKFTGTAPVINSAIAPETSYSFVIIATDIEGFSAVEVEFELVIGAHQLTTSIQNSLIINVTDTGNVSYDLPLNYVYLDDDPISSDKLGSINLLDAPDWVALDNATISGSVPDELLGKNSNPANFSVSIYDTYGDVIYFNFEVVSTTDLFAISSLPNINATRGEWFSYYFLPSQFTDYVNTNVSLEFTNSSQDHDWVKFQSSNLTLAGEVPKNFDKLSLGLKANQGSQSQELYFNIIGMDSKITHSNHSANATSTRSSHHSTSTSSYTSSTYTAKISSTSAAATSSAPAALPAANKTSSHNKKAVAIACGVAIPLGVILVALICFLIFWRRRRENPDDENLPHAISGPDLNNPANKPNQENATPLNNPFDDDASSYDDTSIARRLAALNTLKLDNHSATESDISSVDEKRDSLSGMNTYNDQFQSQSKEELLAKPPVQPPESPFFDPQNRSSSVYMDSEPAVNKSWRYTGNLSPVSDIVRDSYGSQKTVDTEKLFDLEAPEKEKRTSRDVTMSSLDPWNSNISPSPVRKSVTPSPYNVTKHRNRHLQNIQDSQSGKNGITPTTMSTSSSDDFVPVKDGENFCWVHSMEPDRRPSKKRLVDFSNKSNVNVGQVKDIHGRIPEML.

The N-terminal stretch at 1 to 22 is a signal peptide; that stretch reads MTQLQISLLLTATISLLHLVVA. Residues 23-508 are Extracellular-facing; it reads TPYEAYPIGK…SHNKKAVAIA (486 aa). Residues Asn41, Asn50, Asn96, Asn117, Asn163, Asn260, Asn266, Asn304, Asn324, Asn359, Asn382, Asn389, Asn403, Asn447, Asn451, and Asn495 are each glycosylated (N-linked (GlcNAc...) asparagine). A disordered region spans residues 447 to 467; sequence NHSANATSTRSSHHSTSTSSY. Residues 449 to 467 show a composition bias toward low complexity; that stretch reads SANATSTRSSHHSTSTSSY. A helical membrane pass occupies residues 509–529; the sequence is CGVAIPLGVILVALICFLIFW. At 530 to 823 the chain is on the cytoplasmic side; the sequence is RRRRENPDDE…DIHGRIPEML (294 aa). 2 disordered regions span residues 539-576 and 596-627; these read ENLPHAISGPDLNNPANKPNQENATPLNNPFDDDASSY and HSATESDISSVDEKRDSLSGMNTYNDQFQSQS. 2 stretches are compositionally biased toward polar residues: residues 552-566 and 614-626; these read NPANKPNQENATPLN and SGMNTYNDQFQSQ. Residues Ser642, Ser673, and Ser676 each carry the phosphoserine modification. Disordered regions lie at residues 700-734 and 751-771; these read PEKEKRTSRDVTMSSLDPWNSNISPSPVRKSVTPS and DSQSGKNGITPTTMSTSSSDD. The span at 709–724 shows a compositional bias: polar residues; that stretch reads DVTMSSLDPWNSNISP. The span at 760-769 shows a compositional bias: low complexity; sequence TPTTMSTSSS.

In terms of assembly, interacts with BEM1, BUD3, BUD4, BUD5, CDC24 and CDC42. In terms of processing, O-glycosylated by PMT4 and N-glycosylated. O-glycosylation increases activity in daughter cells by enhancing stability and promoting localization to the plasma membrane. May also be O-glycosylated by PMT1 and PMT2.

Its subcellular location is the cell membrane. Its function is as follows. Required for haploid cells axial budding pattern. Acts as an anchor to help direct new growth components and/or polarity establishment components like the BUD5 GTP/GDP exchange factor to localize at the cortical axial budding site. Regulates septin organization in late G1 independently of its role in polarity-axis determination. The chain is Axial budding pattern protein 2 (AXL2) from Saccharomyces cerevisiae (strain ATCC 204508 / S288c) (Baker's yeast).